A 143-amino-acid chain; its full sequence is Large ribosomal subunit protein uL13 (143 aa).

This sequence belongs to the universal ribosomal protein uL13 family. In terms of assembly, part of the 50S ribosomal subunit.

Its function is as follows. This protein is one of the early assembly proteins of the 50S ribosomal subunit, although it is not seen to bind rRNA by itself. It is important during the early stages of 50S assembly. This is Large ribosomal subunit protein uL13 from Desulfitobacterium hafniense (strain DSM 10664 / DCB-2).